Reading from the N-terminus, the 546-residue chain is Peptidoglycan transport ATP-binding protein YejF (546 aa).

ABC transporter domains lie at 12 to 261 and 291 to 530; these read VRDL…RHLL and IKAG…KALL. Residues 46–53 and 323–330 each bind ATP; these read GESGSGKS and GESGSGKT.

This sequence belongs to the ABC transporter superfamily. The complex is composed of one ATP-binding protein (YejF), two transmembrane proteins (YejB and YejE) and a solute-binding protein (YepA or YejA).

Its subcellular location is the cell inner membrane. Functionally, part of the ABC transporter complex YejBEF-YepA involved in the uptake of muropeptides, the breakdown products of cell wall peptidoglycan. The import of muropeptides into the cell enables peptidoglycan recycling, which is vital for cell wall integrity in this bacterium. Is also probably part of the ABC transporter complex YejABEF, which is likely involved in broad-spectrum peptide import. Responsible for energy coupling to the transport system. This is Peptidoglycan transport ATP-binding protein YejF from Agrobacterium fabrum (strain C58 / ATCC 33970) (Agrobacterium tumefaciens (strain C58)).